The primary structure comprises 134 residues: Small ribosomal subunit protein uS11 (134 aa).

Belongs to the universal ribosomal protein uS11 family. Component of the small ribosomal subunit.

It is found in the cytoplasm. This Encephalitozoon cuniculi (strain GB-M1) (Microsporidian parasite) protein is Small ribosomal subunit protein uS11 (RPS14).